The following is a 205-amino-acid chain: RPW8-like protein 2 (205 aa).

One can recognise an RPW8 domain in the interval 1 to 153; it reads MPLTEIIAGA…IMGQPIDCII (153 aa). A helical membrane pass occupies residues 7 to 23; that stretch reads IAGAALGLALQILHEAI. 2 coiled-coil regions span residues 70 to 92 and 125 to 147; these read EDLK…LKRR and ADIK…IMGQ.

Belongs to the plant RPW8 protein family.

Its subcellular location is the membrane. Functionally, probable disease resistance (R) protein. The chain is RPW8-like protein 2 from Arabidopsis thaliana (Mouse-ear cress).